We begin with the raw amino-acid sequence, 285 residues long: MSELTEAEKRRLLRERRQKKFSNGGASSRLNKITGQASSHLNAESPLDAPSAAKTTPPASVHSATPDIKEDSNVAPQLDLLKQLAAMQGQGTGKSTPQDSSTPDLLSLLSSMNTGMPSAEGTPSFGQAAPAAPINQAALDYHDYLLNRLKAWTILVKWVFFLLPYLYLITRPNSSVWPAYAFTQSAWFAPLRNPSNFTRIFATFEFLSISIYYQLLKNVEHKSKIKNLQDTNKLVKLVSLVPEGVIPVANLKGKLITLLQYWDLLSMLITDISFVLIVLGLLTYL.

Residues 1-10 (MSELTEAEKR) are compositionally biased toward basic and acidic residues. Disordered stretches follow at residues 1-72 (MSEL…KEDS) and 87-106 (MQGQGTGKSTPQDSSTPDLL). Ser2 carries the N-acetylserine modification. Residues 2 to 148 (SELTEAEKRR…LDYHDYLLNR (147 aa)) lie on the Cytoplasmic side of the membrane. The span at 11–20 (RLLRERRQKK) shows a compositional bias: basic residues. The span at 24 to 42 (GGASSRLNKITGQASSHLN) shows a compositional bias: polar residues. Ser45 is subject to Phosphoserine. Low complexity predominate over residues 49 to 60 (APSAAKTTPPAS). The segment covering 93–104 (GKSTPQDSSTPD) has biased composition (polar residues). The chain crosses the membrane as a helical span at residues 149-169 (LKAWTILVKWVFFLLPYLYLI). At 170 to 196 (TRPNSSVWPAYAFTQSAWFAPLRNPSN) the chain is on the lumenal side. 2 N-linked (GlcNAc...) asparagine glycosylation sites follow: Asn173 and Asn196. Residues 197–216 (FTRIFATFEFLSISIYYQLL) form a helical membrane-spanning segment. Residues 217–263 (KNVEHKSKIKNLQDTNKLVKLVSLVPEGVIPVANLKGKLITLLQYWD) are Cytoplasmic-facing. A helical membrane pass occupies residues 264–284 (LLSMLITDISFVLIVLGLLTY). Leu285 is a topological domain (lumenal).

It belongs to the GET2 family. Component of the Golgi to ER traffic (GET) complex, which is composed of GET1, GET2 and GET3. Within the complex, GET1 and GET2 form a heterotetramer which is stabilized by phosphatidylinositol binding and which binds to the GET3 homodimer.

It is found in the endoplasmic reticulum membrane. The protein resides in the golgi apparatus membrane. Functionally, required for the post-translational delivery of tail-anchored (TA) proteins to the endoplasmic reticulum. Together with GET1, acts as a membrane receptor for soluble GET3, which recognizes and selectively binds the transmembrane domain of TA proteins in the cytosol. The GET complex cooperates with the HDEL receptor ERD2 to mediate the ATP-dependent retrieval of resident ER proteins that contain a C-terminal H-D-E-L retention signal from the Golgi to the ER. Involved in DNA replication and DNA damage response and also in cell wall function. The protein is Golgi to ER traffic protein 2 of Saccharomyces cerevisiae (strain RM11-1a) (Baker's yeast).